The chain runs to 570 residues: Sulfite reductase [NADPH] hemoprotein beta-component (570 aa).

Cys434, Cys440, Cys479, and Cys483 together coordinate [4Fe-4S] cluster. Siroheme is bound at residue Cys483.

This sequence belongs to the nitrite and sulfite reductase 4Fe-4S domain family. In terms of assembly, alpha(8)-beta(8). The alpha component is a flavoprotein, the beta component is a hemoprotein. Requires siroheme as cofactor. The cofactor is [4Fe-4S] cluster.

It catalyses the reaction hydrogen sulfide + 3 NADP(+) + 3 H2O = sulfite + 3 NADPH + 4 H(+). Its pathway is sulfur metabolism; hydrogen sulfide biosynthesis; hydrogen sulfide from sulfite (NADPH route): step 1/1. Component of the sulfite reductase complex that catalyzes the 6-electron reduction of sulfite to sulfide. This is one of several activities required for the biosynthesis of L-cysteine from sulfate. This chain is Sulfite reductase [NADPH] hemoprotein beta-component, found in Shigella dysenteriae serotype 1 (strain Sd197).